We begin with the raw amino-acid sequence, 329 residues long: MKGYLVAIFLSSIFLYYVLYCILWGTNGYWFPAEEMRTRNNVNNCFKKPAFANLLRFPQLYPFLCRADFIKVAAMSGTNNFPLPYGIKTFETYFSSALSKLQSCDLFDEFDRVPCKRCVVVGNGGVLKNKTLGATIDSYDVIIRMNNGPVLGHEEEVGTRTTFRLFYPESVFSDSSHYDPNTTAVLVVFKPQDLRWLVEILLGKKINTQGFWKTPALKLIYKQYQIRILDPYITSEAAFQMLRFPRVFPKDQKPKHPTTGIIAITMAFHICSEVHLAGFKYNFYSPNSPLHYYGNATMSLMKQNAYHNLTAEQLFLNDIIKKKMVINLT.

Over 1 to 4 (MKGY) the chain is Cytoplasmic. The chain crosses the membrane as a helical; Signal-anchor for type II membrane protein span at residues 5 to 25 (LVAIFLSSIFLYYVLYCILWG). Residues 26 to 329 (TNGYWFPAEE…IKKKMVINLT (304 aa)) lie on the Lumenal side of the membrane. Asn129, Asn181, Asn295, and Asn308 each carry an N-linked (GlcNAc...) asparagine glycan.

It belongs to the glycosyltransferase 29 family.

The protein localises to the golgi apparatus membrane. It catalyses the reaction a neolactoside nLc4Cer(d18:1(4E)) + CMP-N-acetyl-beta-neuraminate = a neolactoside IV(3)-alpha-NeuAc-nLc4Cer(d18:1(4E)) + CMP + H(+). It carries out the reaction a beta-D-galactosyl-(1-&gt;4)-N-acetyl-beta-D-glucosaminyl derivative + CMP-N-acetyl-beta-neuraminate = an N-acetyl-alpha-neuraminyl-(2-&gt;3)-beta-D-galactosyl-(1-&gt;4)-N-acetyl-beta-D-glucosaminyl derivative + CMP + H(+). The enzyme catalyses a neolactoside nLc6Cer(d18:1(4E)) + CMP-N-acetyl-beta-neuraminate = a neolactoside VI(3)-alpha-NeuNAc-nLc6Cer(d18:1(4E)) + CMP + H(+). Transfers the sialyl residue from CMP-N-acetyl-beta-neuraminate to the terminal galactose residue on sugar chains of glycoproteins and glycolipids. It's alpha-2,3-sialyltransferase activity is specific toward type II glycan chains (Galbeta1-4GlcNAc) on glycoproteins and glycolipids such as neolactosides nLc4Cer and nLc6Cer, whose sialyl-products serve as precursors for the Lewis X antigen. Critically involved in the synthesis of functional selectin ligands needed for neutrophil recruitment during inflammation and lymphocyte homing to the lymph nodes. This Mus musculus (Mouse) protein is Type 2 lactosamine alpha-2,3-sialyltransferase (St3gal6).